The primary structure comprises 1582 residues: Sca1 complex scaffold protein scaA (1582 aa).

2 stretches are compositionally biased toward low complexity: residues 1-14 (MSSL…TPST) and 109-131 (LSPS…TTST). Disordered stretches follow at residues 1 to 22 (MSSL…TFSK) and 108 to 147 (GLSP…QIKK). The stretch at 4 to 37 (LDPSLSTTPSTNRRGTFSKAKSFRRAALNLEPQG) is one TPR 1 repeat. A TPR 2 repeat occupies 166–199 (IYTSFPESMAFDDYMDYEESLVEWKRQVEQNLGI). The interval 246–349 (IKETNSSVND…PSTGSLAGFV (104 aa)) is disordered. 3 stretches are compositionally biased toward polar residues: residues 249–267 (TNSS…PTLR), 288–310 (NKDN…NSGI), and 318–332 (SDTS…QLDG). A Phosphoserine; by PKB modification is found at S359. Positions 400–600 (RSGSGFGMDH…QRQTSTWFRG (201 aa)) are gefA and gefH binding. Disordered stretches follow at residues 468-493 (PKNS…GVGG) and 686-734 (SLSS…DKDK). Gly residues-rich tracts occupy residues 478-493 (GSGG…GVGG) and 694-714 (QQQG…GSGS). The span at 715 to 726 (GLNMSGTSGSSG) shows a compositional bias: low complexity. One copy of the TPR 3 repeat lies at 742 to 777 (MHSINNTTNVGTKEDRRQYTKILQTYEQRLQFSFRL). Residues 864–875 (GGGSGGASGGGI) show a composition bias toward gly residues. The disordered stretch occupies residues 864-978 (GGGSGGASGG…GSISTHPNTP (115 aa)). A compositionally biased stretch (low complexity) spans 903–928 (HIPSGSSLLSSPPNRQGSTGSFSFIG). A compositionally biased stretch (polar residues) spans 940 to 953 (NSSSLESPRTQSQL). Over residues 960–972 (GSSPRSHSGGSIS) the composition is skewed to low complexity. Positions 1000-1400 (FLDLTNEKLA…SIKKEGNLYN (401 aa)) are pppA and pho2B binding. A TPR 4 repeat occupies 1080–1113 (TQEVVRLVFVYYYLGIIQERLNFFSNNVGILGFV).

In terms of assembly, component of the Sca1 complex composed of at least gefA, gefH, scaA, phr, and the protein phosphatase 2A subunits pppA and pho2B. In terms of processing, phosphorylated at Ser-359 by PKB and PKBR1 is induced by chemoattractant.

It is found in the cell membrane. Its function is as follows. Component of the Sca1 complex, a regulator of cell motility, chemotaxis and signal relay. The Sca1 complex is recruited to the plasma membrane in a chemoattractant- and F-actin-dependent manner and is enriched at the leading edge of chemotaxing cells where it regulates F-actin dynamics and signal relay by controlling the activation of rasC and the downstream target of rapamycin complex 2 (TORC2)-Akt/protein kinase B (PKB) pathway. ScaA acts as a molecular scaffold, bringing together gefA, gefH and phr with PP2A. The polypeptide is Sca1 complex scaffold protein scaA (Dictyostelium discoideum (Social amoeba)).